A 570-amino-acid polypeptide reads, in one-letter code: Sulfite reductase [NADPH] hemoprotein beta-component (570 aa).

4 residues coordinate [4Fe-4S] cluster: Cys434, Cys440, Cys479, and Cys483. A siroheme-binding site is contributed by Cys483.

It belongs to the nitrite and sulfite reductase 4Fe-4S domain family. Alpha(8)-beta(8). The alpha component is a flavoprotein, the beta component is a hemoprotein. It depends on siroheme as a cofactor. [4Fe-4S] cluster serves as cofactor.

The enzyme catalyses hydrogen sulfide + 3 NADP(+) + 3 H2O = sulfite + 3 NADPH + 4 H(+). It functions in the pathway sulfur metabolism; hydrogen sulfide biosynthesis; hydrogen sulfide from sulfite (NADPH route): step 1/1. Functionally, component of the sulfite reductase complex that catalyzes the 6-electron reduction of sulfite to sulfide. This is one of several activities required for the biosynthesis of L-cysteine from sulfate. In Escherichia coli O9:H4 (strain HS), this protein is Sulfite reductase [NADPH] hemoprotein beta-component.